An 81-amino-acid polypeptide reads, in one-letter code: Photosystem I iron-sulfur center (81 aa).

4Fe-4S ferredoxin-type domains follow at residues 2–31 (AHSVKIYDTCIGCTQCVRACPTDVLEMIPW) and 39–68 (IASAPRTEDCVGCKRCESACPTDFLSVRVY). The [4Fe-4S] cluster site is built by C11, C14, C17, C21, C48, C51, C54, and C58.

In terms of assembly, the eukaryotic PSI reaction center is composed of at least 11 subunits. The cofactor is [4Fe-4S] cluster.

The protein localises to the plastid. It is found in the chloroplast thylakoid membrane. The enzyme catalyses reduced [plastocyanin] + hnu + oxidized [2Fe-2S]-[ferredoxin] = oxidized [plastocyanin] + reduced [2Fe-2S]-[ferredoxin]. Apoprotein for the two 4Fe-4S centers FA and FB of photosystem I (PSI); essential for photochemical activity. FB is the terminal electron acceptor of PSI, donating electrons to ferredoxin. The C-terminus interacts with PsaA/B/D and helps assemble the protein into the PSI complex. Required for binding of PsaD and PsaE to PSI. PSI is a plastocyanin-ferredoxin oxidoreductase, converting photonic excitation into a charge separation, which transfers an electron from the donor P700 chlorophyll pair to the spectroscopically characterized acceptors A0, A1, FX, FA and FB in turn. The polypeptide is Photosystem I iron-sulfur center (Zygnema circumcarinatum (Green alga)).